Consider the following 185-residue polypeptide: Protein LPA2 (185 aa).

The N-terminal 46 residues, Met-1 to Arg-46, are a transit peptide targeting the chloroplast. A disordered region spans residues Gln-35–Lys-105. Positions Ser-47–Ser-75 are enriched in low complexity. Residues Lys-83–Val-92 show a composition bias toward basic and acidic residues. Transmembrane regions (helical) follow at residues Ala-115 to Ala-135 and Val-152 to Val-172.

It is found in the plastid. The protein resides in the chloroplast membrane. The polypeptide is Protein LPA2 (Arabidopsis thaliana (Mouse-ear cress)).